The primary structure comprises 319 residues: Thioredoxin reductase (319 aa).

36–48 (EGFMAGGVAAGGQ) is a binding site for FAD. Cysteine 144 and cysteine 147 are oxidised to a cystine. FAD is bound at residue 289–298 (DVQDKVYRQA).

It belongs to the class-II pyridine nucleotide-disulfide oxidoreductase family. As to quaternary structure, homodimer. FAD is required as a cofactor.

It carries out the reaction [thioredoxin]-dithiol + NADP(+) = [thioredoxin]-disulfide + NADPH + H(+). In Dictyostelium discoideum (Social amoeba), this protein is Thioredoxin reductase (trrA).